Reading from the N-terminus, the 68-residue chain is Palustrin-1c (68 aa).

Residues 1 to 22 (MFTTKKSLLLLFFLGTISLSLC) form the signal peptide. Positions 23–39 (EEERGADEEEGDGEKLT) are excised as a propeptide. The cysteines at positions 62 and 68 are disulfide-linked.

As to expression, expressed by the skin glands.

It localises to the secreted. Its function is as follows. Antimicrobial activity against Gram-negative bacterium E.coli. Stimulates insulin release. The sequence is that of Palustrin-1c from Lithobates palustris (Pickerel frog).